A 1032-amino-acid polypeptide reads, in one-letter code: Integrin alpha-4 (1032 aa).

Positions 1-33 are cleaved as a signal peptide; it reads MAWEARREPGPRRAAVRETVMLLLCLGVPTGRP. 7 FG-GAP repeats span residues 35 to 100, 110 to 177, 185 to 237, 238 to 291, 292 to 351, 355 to 412, and 416 to 478; these read NVDT…PGQT, NGEP…TELS, QDYV…KYKA, FLDK…EKEL, NILH…GAVM, ETNL…GISS, and QRIE…HPES. Over 35-977 the chain is Extracellular; sequence NVDTESALLY…HHQRPKRYFT (943 aa). Asn-79 carries an N-linked (GlcNAc...) asparagine glycan. The cysteines at positions 91 and 101 are disulfide-linked. The N-linked (GlcNAc...) asparagine glycan is linked to Asn-138. 2 disulfide bridges follow: Cys-144–Cys-165 and Cys-183–Cys-198. Asn-229 carries N-linked (GlcNAc...) asparagine glycosylation. Positions 314, 316, 318, 322, 377, 379, 381, 385, 439, 441, 443, 445, and 447 each coordinate Ca(2+). An N-linked (GlcNAc...) asparagine glycan is attached at Asn-480. 2 cysteine pairs are disulfide-bonded: Cys-486–Cys-495 and Cys-501–Cys-557. N-linked (GlcNAc...) asparagine glycosylation is found at Asn-518 and Asn-538. Residues 606–616 carry the SG1 motif; the sequence is KKEKDIMKKTI. A disulfide bridge links Cys-622 with Cys-627. Residues Asn-626, Asn-645, and Asn-660 are each glycosylated (N-linked (GlcNAc...) asparagine). Cys-698 and Cys-711 are oxidised to a cystine. N-linked (GlcNAc...) asparagine glycosylation is found at Asn-806 and Asn-821. 2 disulfides stabilise this stretch: Cys-852-Cys-890 and Cys-897-Cys-902. Residues 978-1001 form a helical membrane-spanning segment; that stretch reads IVIISSSLLLGLIVLLLISYVMWK. The Cytoplasmic segment spans residues 1002 to 1032; it reads AGFFKRQYKSILQEENRRDSWSYINSKSNDD. Positions 1003-1007 match the GFFKR motif motif; the sequence is GFFKR. Ser-1021 bears the Phosphoserine mark.

The protein belongs to the integrin alpha chain family. Heterodimer of an alpha and a beta subunit. The alpha subunit can sometimes be cleaved into two non-covalently associated fragments. Alpha-4 associates with either beta-1 or beta-7. Alpha-4 interacts with PXN, LPXN, and TGFB1I1/HIC5. Interacts with CSPG4 through CSPG4 chondroitin sulfate glycosaminoglycan. Interacts with JAML; integrin alpha-4/beta-1 may regulate leukocyte to endothelial cells adhesion by controlling JAML homodimerization. ITGA4:ITGB1 is found in a ternary complex with CX3CR1 and CX3CL1. Interacts with MDK. ITGA4:ITGB1 interacts with MDK; this interaction mediates MDK-induced osteoblast cells migration through PXN phosphorylation. Integrin ITGA4:ITGB1 interacts with SVEP1 (via Sushi domain 21); thereby inhibits Ca(2+) intracellular signaling and as a result represses vasocontraction. ITGA4:ITGB1 interacts with SELP. ITGA4:ITGB1 interacts with BCAM. Post-translationally, phosphorylation on Ser-1027 inhibits PXN binding. As to expression, expressed in vascular smooth muscle cells (at protein level).

It is found in the membrane. In terms of biological role, integrins alpha-4/beta-1 (VLA-4) and alpha-4/beta-7 are receptors for fibronectin. They recognize one or more domains within the alternatively spliced CS-1 and CS-5 regions of fibronectin. They are also receptors for VCAM1. Integrin alpha-4/beta-1 recognizes the sequence Q-I-D-S in VCAM1. Integrin alpha-4/beta-7 is also a receptor for MADCAM1. It recognizes the sequence L-D-T in MADCAM1. On activated endothelial cells integrin VLA-4 triggers homotypic aggregation for most VLA-4-positive leukocyte cell lines. It may also participate in cytolytic T-cell interactions with target cells. ITGA4:ITGB1 binds to fractalkine (CX3CL1) and may act as its coreceptor in CX3CR1-dependent fractalkine signaling. ITGA4:ITGB1 binds to PLA2G2A via a site (site 2) which is distinct from the classical ligand-binding site (site 1) and this induces integrin conformational changes and enhanced ligand binding to site 1. Integrin ITGA4:ITGB1 represses PRKCA-mediated L-type voltage-gated channel Ca(2+) influx and ROCK-mediated calcium sensitivity in vascular smooth muscle cells via its interaction with SVEP1, thereby inhibiting vasocontraction. The sequence is that of Integrin alpha-4 (ITGA4) from Homo sapiens (Human).